The following is a 130-amino-acid chain: Organic solute transporter subunit beta (130 aa).

At 1–35 the chain is on the extracellular side; the sequence is MNYSEKLTGAPPMTEVPLELLEEMLWFFRVEDATP. A helical transmembrane segment spans residues 36–56; sequence WNCSMFVLAALVAIISFILLG. The Cytoplasmic segment spans residues 57–130; sequence RNIQANRNQK…HLPDPQEPES (74 aa). Residues 99–130 form a disordered region; it reads LSEKPTLAQGEMEAKCSDVPRVHLPDPQEPES. The segment covering 110 to 124 has biased composition (basic and acidic residues); it reads MEAKCSDVPRVHLPD.

Belongs to the OST-beta family. Interacts with SLC51A. The Ost-alpha/Ost-beta complex is a heterodimer composed of alpha (SLC51A) and beta (SLC51B) subunit; induces the transport of SLC51A from the endoplasmic reticulum to the plasma membrane.

It is found in the cell membrane. It catalyses the reaction taurocholate(out) = taurocholate(in). It carries out the reaction estrone 3-sulfate(out) = estrone 3-sulfate(in). The enzyme catalyses dehydroepiandrosterone 3-sulfate(out) = dehydroepiandrosterone 3-sulfate(in). The catalysed reaction is tauroursodeoxycholate(out) = tauroursodeoxycholate(in). It catalyses the reaction glycoursodeoxycholate(out) = glycoursodeoxycholate(in). It carries out the reaction glycocholate(out) = glycocholate(in). The enzyme catalyses taurochenodeoxycholate(out) = taurochenodeoxycholate(in). The catalysed reaction is glycochenodeoxycholate(out) = glycochenodeoxycholate(in). It catalyses the reaction taurodeoxycholate(out) = taurodeoxycholate(in). It carries out the reaction glycodeoxycholate(out) = glycodeoxycholate(in). The enzyme catalyses prostaglandin E2(out) = prostaglandin E2(in). Functionally, essential component of the Ost-alpha/Ost-beta complex, a heterodimer that acts as the intestinal basolateral transporter responsible for bile acid export from enterocytes into portal blood. The Ost-alpha/Ost-beta complex efficiently transports the major species of bile acids (taurocholate). Taurine conjugates are transported more efficiently across the basolateral membrane than glycine-conjugated bile acids. Can also transport steroids such as estrone 3-sulfate and dehydroepiandrosterone 3-sulfate, therefore playing a role in the enterohepatic circulation of sterols. Able to transport eicosanoids such as prostaglandin E2. Modulates SLC51A glycosylation, membrane trafficking and stability activities. The sequence is that of Organic solute transporter subunit beta (SLC51B) from Bos taurus (Bovine).